Here is a 396-residue protein sequence, read N- to C-terminus: Acetate kinase (396 aa).

Asn7 provides a ligand contact to Mg(2+). Lys14 contacts ATP. Residue Arg88 coordinates substrate. Asp145 serves as the catalytic Proton donor/acceptor. Residues 205 to 209 (HLGNG), 279 to 281 (DFR), and 327 to 331 (GIGEN) contribute to the ATP site. Glu381 provides a ligand contact to Mg(2+).

Belongs to the acetokinase family. Homodimer. It depends on Mg(2+) as a cofactor. Requires Mn(2+) as cofactor.

The protein resides in the cytoplasm. The enzyme catalyses acetate + ATP = acetyl phosphate + ADP. Its pathway is metabolic intermediate biosynthesis; acetyl-CoA biosynthesis; acetyl-CoA from acetate: step 1/2. Catalyzes the formation of acetyl phosphate from acetate and ATP. Can also catalyze the reverse reaction. This chain is Acetate kinase, found in Campylobacter jejuni subsp. jejuni serotype O:23/36 (strain 81-176).